Consider the following 87-residue polypeptide: Small ribosomal subunit protein bS20 (87 aa).

Belongs to the bacterial ribosomal protein bS20 family.

Binds directly to 16S ribosomal RNA. The polypeptide is Small ribosomal subunit protein bS20 (Sphingopyxis alaskensis (strain DSM 13593 / LMG 18877 / RB2256) (Sphingomonas alaskensis)).